Consider the following 741-residue polypeptide: Phosphoribosylformylglycinamidine synthase subunit PurL (741 aa).

The active site involves H54. ATP contacts are provided by Y57 and K96. E98 is a Mg(2+) binding site. Substrate contacts are provided by residues S99 to H102 and R121. H100 (proton acceptor) is an active-site residue. D122 is a Mg(2+) binding site. Q245 lines the substrate pocket. D273 lines the Mg(2+) pocket. E317–Q319 serves as a coordination point for substrate. Residues D500 and G537 each contribute to the ATP site. Residue N538 coordinates Mg(2+). Residue S540 coordinates substrate.

It belongs to the FGAMS family. As to quaternary structure, monomer. Part of the FGAM synthase complex composed of 1 PurL, 1 PurQ and 2 PurS subunits.

It localises to the cytoplasm. The enzyme catalyses N(2)-formyl-N(1)-(5-phospho-beta-D-ribosyl)glycinamide + L-glutamine + ATP + H2O = 2-formamido-N(1)-(5-O-phospho-beta-D-ribosyl)acetamidine + L-glutamate + ADP + phosphate + H(+). The protein operates within purine metabolism; IMP biosynthesis via de novo pathway; 5-amino-1-(5-phospho-D-ribosyl)imidazole from N(2)-formyl-N(1)-(5-phospho-D-ribosyl)glycinamide: step 1/2. Its function is as follows. Part of the phosphoribosylformylglycinamidine synthase complex involved in the purines biosynthetic pathway. Catalyzes the ATP-dependent conversion of formylglycinamide ribonucleotide (FGAR) and glutamine to yield formylglycinamidine ribonucleotide (FGAM) and glutamate. The FGAM synthase complex is composed of three subunits. PurQ produces an ammonia molecule by converting glutamine to glutamate. PurL transfers the ammonia molecule to FGAR to form FGAM in an ATP-dependent manner. PurS interacts with PurQ and PurL and is thought to assist in the transfer of the ammonia molecule from PurQ to PurL. The sequence is that of Phosphoribosylformylglycinamidine synthase subunit PurL from Shouchella clausii (strain KSM-K16) (Alkalihalobacillus clausii).